The primary structure comprises 601 residues: Elongation factor 4 (601 aa).

The tr-type G domain occupies 6 to 188; the sequence is SRTRNFSIIA…DIVKNVPPPK (183 aa). Residues 18 to 23 and 135 to 138 each bind GTP; these read DHGKST and NKID.

The protein belongs to the TRAFAC class translation factor GTPase superfamily. Classic translation factor GTPase family. LepA subfamily.

The protein localises to the cell membrane. It carries out the reaction GTP + H2O = GDP + phosphate + H(+). Functionally, required for accurate and efficient protein synthesis under certain stress conditions. May act as a fidelity factor of the translation reaction, by catalyzing a one-codon backward translocation of tRNAs on improperly translocated ribosomes. Back-translocation proceeds from a post-translocation (POST) complex to a pre-translocation (PRE) complex, thus giving elongation factor G a second chance to translocate the tRNAs correctly. Binds to ribosomes in a GTP-dependent manner. The polypeptide is Elongation factor 4 (Clostridioides difficile (strain 630) (Peptoclostridium difficile)).